A 67-amino-acid chain; its full sequence is Copper transport protein ATOX1 homolog (67 aa).

The HMA domain maps to 1–64 (MTYSFFVDMT…NIQKTGKKCS (64 aa)). Cysteine 11 and cysteine 14 together coordinate Cu cation.

This sequence belongs to the ATX1 family.

In terms of biological role, could bind and deliver cytosolic copper to the copper ATPase proteins. May be important in cellular antioxidant defense. The sequence is that of Copper transport protein ATOX1 homolog (atox1) from Dictyostelium discoideum (Social amoeba).